Here is a 370-residue protein sequence, read N- to C-terminus: UDP-3-O-acylglucosamine N-acyltransferase (370 aa).

The active-site Proton acceptor is the histidine 252. A disordered region spans residues 350 to 370 (AAGRQDGPAANAASSSAGDKA). Over residues 358–370 (AANAASSSAGDKA) the composition is skewed to low complexity.

This sequence belongs to the transferase hexapeptide repeat family. LpxD subfamily. Homotrimer.

It catalyses the reaction a UDP-3-O-[(3R)-3-hydroxyacyl]-alpha-D-glucosamine + a (3R)-hydroxyacyl-[ACP] = a UDP-2-N,3-O-bis[(3R)-3-hydroxyacyl]-alpha-D-glucosamine + holo-[ACP] + H(+). It functions in the pathway bacterial outer membrane biogenesis; LPS lipid A biosynthesis. Catalyzes the N-acylation of UDP-3-O-acylglucosamine using 3-hydroxyacyl-ACP as the acyl donor. Is involved in the biosynthesis of lipid A, a phosphorylated glycolipid that anchors the lipopolysaccharide to the outer membrane of the cell. This is UDP-3-O-acylglucosamine N-acyltransferase from Paraburkholderia xenovorans (strain LB400).